A 331-amino-acid chain; its full sequence is 6-phosphogluconolactonase (331 aa).

This sequence belongs to the cycloisomerase 2 family.

The catalysed reaction is 6-phospho-D-glucono-1,5-lactone + H2O = 6-phospho-D-gluconate + H(+). The protein operates within carbohydrate degradation; pentose phosphate pathway; D-ribulose 5-phosphate from D-glucose 6-phosphate (oxidative stage): step 2/3. Catalyzes the hydrolysis of 6-phosphogluconolactone to 6-phosphogluconate. This chain is 6-phosphogluconolactonase, found in Buchnera aphidicola subsp. Baizongia pistaciae (strain Bp).